A 140-amino-acid chain; its full sequence is UPF0134 protein MPN_094 (140 aa).

The protein belongs to the UPF0134 family.

The sequence is that of UPF0134 protein MPN_094 from Mycoplasma pneumoniae (strain ATCC 29342 / M129 / Subtype 1) (Mycoplasmoides pneumoniae).